The primary structure comprises 142 residues: Large ribosomal subunit protein uL13 (142 aa).

Belongs to the universal ribosomal protein uL13 family. As to quaternary structure, part of the 50S ribosomal subunit.

This protein is one of the early assembly proteins of the 50S ribosomal subunit, although it is not seen to bind rRNA by itself. It is important during the early stages of 50S assembly. This Thioalkalivibrio sulfidiphilus (strain HL-EbGR7) protein is Large ribosomal subunit protein uL13.